The primary structure comprises 534 residues: Bifunctional purine biosynthesis protein PurH (534 aa).

Residues 1–148 (MNTVRPIRRA…KNHQDVTIVV (148 aa)) enclose the MGS-like domain.

This sequence belongs to the PurH family.

It carries out the reaction (6R)-10-formyltetrahydrofolate + 5-amino-1-(5-phospho-beta-D-ribosyl)imidazole-4-carboxamide = 5-formamido-1-(5-phospho-D-ribosyl)imidazole-4-carboxamide + (6S)-5,6,7,8-tetrahydrofolate. The catalysed reaction is IMP + H2O = 5-formamido-1-(5-phospho-D-ribosyl)imidazole-4-carboxamide. It functions in the pathway purine metabolism; IMP biosynthesis via de novo pathway; 5-formamido-1-(5-phospho-D-ribosyl)imidazole-4-carboxamide from 5-amino-1-(5-phospho-D-ribosyl)imidazole-4-carboxamide (10-formyl THF route): step 1/1. It participates in purine metabolism; IMP biosynthesis via de novo pathway; IMP from 5-formamido-1-(5-phospho-D-ribosyl)imidazole-4-carboxamide: step 1/1. The polypeptide is Bifunctional purine biosynthesis protein PurH (Shewanella denitrificans (strain OS217 / ATCC BAA-1090 / DSM 15013)).